Consider the following 196-residue polypeptide: Probable malonic semialdehyde reductase RutE (196 aa).

This sequence belongs to the nitroreductase family. HadB/RutE subfamily. FMN is required as a cofactor.

The enzyme catalyses 3-hydroxypropanoate + NADP(+) = 3-oxopropanoate + NADPH + H(+). Its function is as follows. May reduce toxic product malonic semialdehyde to 3-hydroxypropionic acid, which is excreted. The polypeptide is Probable malonic semialdehyde reductase RutE (Cronobacter sakazakii (strain ATCC BAA-894) (Enterobacter sakazakii)).